A 360-amino-acid chain; its full sequence is uncharacterized protein (360 aa).

Residues 19 to 179 (LALGSGGARG…LDPLPMAPIA (161 aa)) enclose the PNPLA domain. A GXSXG motif is present at residues 50-54 (GSSMG). S52 serves as the catalytic Nucleophile. Residue D166 is the Proton acceptor of the active site. The DGA/G motif lies at 166-168 (DGG). A disordered region spans residues 251-282 (DSWSQAPEIEQRPAGPPADREEAADTPGLPKM).

This sequence belongs to the NTE family.

This is an uncharacterized protein from Mycobacterium bovis (strain ATCC BAA-935 / AF2122/97).